We begin with the raw amino-acid sequence, 1187 residues long: Disease resistance protein TAO1 (1187 aa).

Residues 38-202 form the TIR domain; it reads WLHPVFLSFR…KISKDVSDVL (165 aa). Residue E113 is part of the active site. In terms of domain architecture, NB-ARC spans 217-478; that stretch reads EAHTTEITSL…FFRRERIETL (262 aa). LRR repeat units lie at residues 498 to 522, 611 to 633, 635 to 658, 660 to 679, 680 to 703, 704 to 727, 728 to 750, 752 to 775, 799 to 823, 824 to 849, 870 to 894, 895 to 918, 920 to 942, and 953 to 974; these read DKSL…GLDI, SRKL…KFNP, FLVK…PIRN, KWMD…FSTA, TNLQ…IGNA, TNLL…IGNL, TNLK…SFGN, TSLK…IGNI, NTNL…MLNL, TRLE…VINL, ATNL…IWNI, TNLQ…VENA, NLQS…IWRI, and CSSL…LILD.

The catalysed reaction is NAD(+) + H2O = ADP-D-ribose + nicotinamide + H(+). Its function is as follows. TIR-NB-LRR receptor-like protein that contributes to disease resistance induced by the Pseudomonas syringae type III effector AvrB. Acts additively with RPM1 to generate a full disease resistance response to P.syringae expressing this type III effector. The polypeptide is Disease resistance protein TAO1 (Arabidopsis thaliana (Mouse-ear cress)).